The following is a 362-amino-acid chain: NAD(P)H-quinone oxidoreductase subunit 1, chloroplastic (362 aa).

8 helical membrane-spanning segments follow: residues 27 to 47 (IWIL…LVIV), 103 to 123 (IAVI…HFVL), 128 to 148 (IGVF…LMAG), 164 to 184 (AAQS…ISLL), 202 to 222 (FFGW…ISSL), 247 to 267 (YSGI…LVSS), 303 to 323 (VIGI…SITI), and 342 to 362 (FLLP…LVSL).

This sequence belongs to the complex I subunit 1 family. In terms of assembly, NDH is composed of at least 16 different subunits, 5 of which are encoded in the nucleus.

It localises to the plastid. The protein resides in the chloroplast thylakoid membrane. It carries out the reaction a plastoquinone + NADH + (n+1) H(+)(in) = a plastoquinol + NAD(+) + n H(+)(out). It catalyses the reaction a plastoquinone + NADPH + (n+1) H(+)(in) = a plastoquinol + NADP(+) + n H(+)(out). In terms of biological role, NDH shuttles electrons from NAD(P)H:plastoquinone, via FMN and iron-sulfur (Fe-S) centers, to quinones in the photosynthetic chain and possibly in a chloroplast respiratory chain. The immediate electron acceptor for the enzyme in this species is believed to be plastoquinone. Couples the redox reaction to proton translocation, and thus conserves the redox energy in a proton gradient. This is NAD(P)H-quinone oxidoreductase subunit 1, chloroplastic from Saccharum hybrid (Sugarcane).